We begin with the raw amino-acid sequence, 82 residues long: 4-(gamma-L-glutamylamino)butanoyl-[BtrI acyl-carrier protein] monooxygenase BtrO (82 aa).

Homotetramer.

It catalyses the reaction 4-(gamma-L-glutamylamino)butanoyl-[BtrI ACP] + FMNH2 + O2 = 4-(gamma-L-glutamylamino)-(2S)-2-hydroxybutanoyl-[BtrI ACP] + FMN + H2O + H(+). It functions in the pathway antibiotic biosynthesis; butirosin biosynthesis. Functionally, NAD(P)H:FMN oxidoreductase component of a two-component system involved in the biosynthesis of the side chain of the aminoglycoside antibiotics in the biosynthetic pathway of butirosin. Together with BtrO, mediates hydroxylation of gamma-L-Glu-GABA-S-BtrI. In Niallia circulans (Bacillus circulans), this protein is 4-(gamma-L-glutamylamino)butanoyl-[BtrI acyl-carrier protein] monooxygenase BtrO (btrV).